The primary structure comprises 235 residues: Leucyl/phenylalanyl-tRNA--protein transferase (235 aa).

The protein belongs to the L/F-transferase family.

It is found in the cytoplasm. The enzyme catalyses N-terminal L-lysyl-[protein] + L-leucyl-tRNA(Leu) = N-terminal L-leucyl-L-lysyl-[protein] + tRNA(Leu) + H(+). The catalysed reaction is N-terminal L-arginyl-[protein] + L-leucyl-tRNA(Leu) = N-terminal L-leucyl-L-arginyl-[protein] + tRNA(Leu) + H(+). It carries out the reaction L-phenylalanyl-tRNA(Phe) + an N-terminal L-alpha-aminoacyl-[protein] = an N-terminal L-phenylalanyl-L-alpha-aminoacyl-[protein] + tRNA(Phe). In terms of biological role, functions in the N-end rule pathway of protein degradation where it conjugates Leu, Phe and, less efficiently, Met from aminoacyl-tRNAs to the N-termini of proteins containing an N-terminal arginine or lysine. The chain is Leucyl/phenylalanyl-tRNA--protein transferase from Methylococcus capsulatus (strain ATCC 33009 / NCIMB 11132 / Bath).